Here is a 210-residue protein sequence, read N- to C-terminus: Redox-sensing transcriptional repressor Rex (210 aa).

Positions 17–56 (KYHRYLNELMKNDVDRISSKELGEKIGFTASQIRQDLNCF) form a DNA-binding region, H-T-H motif. An NAD(+)-binding site is contributed by 91 to 96 (GAGNIG).

Belongs to the transcriptional regulatory Rex family. In terms of assembly, homodimer.

It localises to the cytoplasm. Its function is as follows. Modulates transcription in response to changes in cellular NADH/NAD(+) redox state. The chain is Redox-sensing transcriptional repressor Rex from Clostridium botulinum (strain Eklund 17B / Type B).